We begin with the raw amino-acid sequence, 627 residues long: Phosphomethylpyrimidine synthase (627 aa).

Positions 1–24 (MSATQKNNITRLEQLDRQSTQPFP) are enriched in polar residues. Positions 1 to 29 (MSATQKNNITRLEQLDRQSTQPFPNSRKV) are disordered. Residues Asn231, Met260, Tyr289, His325, 345–347 (SRG), 386–389 (DGLR), and Glu425 contribute to the substrate site. His429 provides a ligand contact to Zn(2+). Position 452 (Tyr452) interacts with substrate. His493 lines the Zn(2+) pocket. [4Fe-4S] cluster is bound by residues Cys573, Cys576, and Cys581.

It belongs to the ThiC family. Homodimer. [4Fe-4S] cluster is required as a cofactor.

The catalysed reaction is 5-amino-1-(5-phospho-beta-D-ribosyl)imidazole + S-adenosyl-L-methionine = 4-amino-2-methyl-5-(phosphooxymethyl)pyrimidine + CO + 5'-deoxyadenosine + formate + L-methionine + 3 H(+). It participates in cofactor biosynthesis; thiamine diphosphate biosynthesis. Catalyzes the synthesis of the hydroxymethylpyrimidine phosphate (HMP-P) moiety of thiamine from aminoimidazole ribotide (AIR) in a radical S-adenosyl-L-methionine (SAM)-dependent reaction. The protein is Phosphomethylpyrimidine synthase of Pseudomonas aeruginosa (strain LESB58).